Reading from the N-terminus, the 162-residue chain is Caveolin-2 (162 aa).

At 1-86 (MGLETEKADV…FEISKYVIYK (86 aa)) the chain is on the cytoplasmic side. The residue at position 19 (Tyr-19) is a Phosphotyrosine; by SRC. Residues Ser-20 and Ser-23 each carry the phosphoserine modification. Phosphotyrosine; by SRC is present on Tyr-27. The residue at position 36 (Ser-36) is a Phosphoserine. Residues 87 to 107 (FLTVFLAIPLAFAAGIIFATL) constitute an intramembrane region (helical). Residues 108–162 (SCLHIWIIMPFVKTCLMVLPSVQTIWRSVTDAVIAPLCTSVGRVFSSVSLQLSRD) lie on the Cytoplasmic side of the membrane.

It belongs to the caveolin family. Monomer or homodimer. Interacts with CAV1; the interaction forms a stable heterooligomeric complex that is required for targeting to lipid rafts and for caveolae formation. Tyrosine phosphorylated forms do not form heterooligomers with the Tyr-19-phosphorylated form existing as a monomer or dimer, and the Tyr-27-form as a monomer only. Interacts (tyrosine phosphorylated form) with the SH2 domain-containing proteins, RASA1, NCK1 and SRC. Interacts (tyrosine phosphorylated form) with INSR, the interaction (Tyr-27-phosphorylated form) is increased on insulin stimulation. Interacts (Tyr-19 phosphorylated form) with MAPK1 (phosphorylated form); the interaction, promoted by insulin, leads to nuclear location and MAPK1 activation. Interacts with STAT3; the interaction is increased on insulin-induced tyrosine phosphorylation leading to STAT activation. In terms of processing, phosphorylated on serine and tyrosine residues. CAV1 promotes phosphorylation on Ser-23 which then targets the complex to the plasma membrane, lipid rafts and caveolae. Phosphorylation on Ser-36 appears to modulate mitosis in endothelial cells. Phosphorylation on both Tyr-19 and Tyr-27 is required for insulin-induced 'Ser-727' phosphorylation of STAT3 and its activation. Phosphorylation on Tyr-19 is required for insulin-induced phosphorylation of MAPK1 and DNA binding of STAT3. Tyrosine phosphorylation is induced by both EGF and insulin (By. similarity).

It is found in the nucleus. The protein resides in the cytoplasm. The protein localises to the golgi apparatus membrane. Its subcellular location is the cell membrane. It localises to the membrane. It is found in the caveola. May act as a scaffolding protein within caveolar membranes. Interacts directly with G-protein alpha subunits and can functionally regulate their activity. Acts as an accessory protein in conjunction with CAV1 in targeting to lipid rafts and driving caveolae formation. The Ser-36 phosphorylated form has a role in modulating mitosis in endothelial cells. Positive regulator of cellular mitogenesis of the MAPK signaling pathway. Required for the insulin-stimulated nuclear translocation and activation of MAPK1 and STAT3, and the subsequent regulation of cell cycle progression. The protein is Caveolin-2 (CAV2) of Carollia perspicillata (Seba's short-tailed bat).